Consider the following 346-residue polypeptide: Hydroxymethylglutaryl-CoA synthase (346 aa).

Position 28 (aspartate 28) interacts with (3S)-3-hydroxy-3-methylglutaryl-CoA. Residue glutamate 80 is the Proton donor/acceptor of the active site. (3S)-3-hydroxy-3-methylglutaryl-CoA contacts are provided by cysteine 112 and threonine 153. The active-site Acyl-thioester intermediate is cysteine 112. CoA is bound at residue arginine 199. 2 residues coordinate (3S)-3-hydroxy-3-methylglutaryl-CoA: threonine 201 and histidine 234. The active-site Proton donor/acceptor is histidine 234. Lysine 239 contributes to the CoA binding site. 3 residues coordinate (3S)-3-hydroxy-3-methylglutaryl-CoA: lysine 243, asparagine 266, and serine 296.

This sequence belongs to the thiolase-like superfamily. Archaeal HMG-CoA synthase family. As to quaternary structure, interacts with acetoacetyl-CoA thiolase that catalyzes the precedent step in the pathway and with a DUF35 protein. The acetoacetyl-CoA thiolase/HMG-CoA synthase complex channels the intermediate via a fused CoA-binding site, which allows for efficient coupling of the endergonic thiolase reaction with the exergonic HMGCS reaction.

The catalysed reaction is acetoacetyl-CoA + acetyl-CoA + H2O = (3S)-3-hydroxy-3-methylglutaryl-CoA + CoA + H(+). The protein operates within metabolic intermediate biosynthesis; (R)-mevalonate biosynthesis; (R)-mevalonate from acetyl-CoA: step 2/3. Functionally, catalyzes the condensation of acetyl-CoA with acetoacetyl-CoA to form 3-hydroxy-3-methylglutaryl-CoA (HMG-CoA). Functions in the mevalonate (MVA) pathway leading to isopentenyl diphosphate (IPP), a key precursor for the biosynthesis of isoprenoid compounds that are building blocks of archaeal membrane lipids. The protein is Hydroxymethylglutaryl-CoA synthase of Methanothermobacter thermautotrophicus (strain ATCC 29096 / DSM 1053 / JCM 10044 / NBRC 100330 / Delta H) (Methanobacterium thermoautotrophicum).